We begin with the raw amino-acid sequence, 797 residues long: Xaa-Pro dipeptidyl-peptidase (797 aa).

Catalysis depends on charge relay system residues S370, D490, and H521.

The protein belongs to the peptidase S15 family. In terms of assembly, homodimer.

The protein resides in the cytoplasm. It carries out the reaction Hydrolyzes Xaa-Pro-|- bonds to release unblocked, N-terminal dipeptides from substrates including Ala-Pro-|-p-nitroanilide and (sequentially) Tyr-Pro-|-Phe-Pro-|-Gly-Pro-|-Ile.. In terms of biological role, removes N-terminal dipeptides sequentially from polypeptides having unsubstituted N-termini provided that the penultimate residue is proline. The protein is Xaa-Pro dipeptidyl-peptidase of Lacticaseibacillus paracasei (strain ATCC 334 / BCRC 17002 / CCUG 31169 / CIP 107868 / KCTC 3260 / NRRL B-441) (Lactobacillus paracasei).